The chain runs to 472 residues: Adenosylhomocysteinase (472 aa).

Substrate-binding residues include Thr-60, Asp-136, and Glu-197. 198 to 200 lines the NAD(+) pocket; the sequence is TTT. Positions 227 and 231 each coordinate substrate. Residues Asn-232, 261-266, Glu-284, Asn-319, 340-342, and Asn-388 contribute to the NAD(+) site; these read GYGDVG and IGH.

The protein belongs to the adenosylhomocysteinase family. The cofactor is NAD(+).

The protein resides in the cytoplasm. It carries out the reaction S-adenosyl-L-homocysteine + H2O = L-homocysteine + adenosine. The protein operates within amino-acid biosynthesis; L-homocysteine biosynthesis; L-homocysteine from S-adenosyl-L-homocysteine: step 1/1. Functionally, may play a key role in the regulation of the intracellular concentration of adenosylhomocysteine. The polypeptide is Adenosylhomocysteinase (Maridesulfovibrio salexigens (strain ATCC 14822 / DSM 2638 / NCIMB 8403 / VKM B-1763) (Desulfovibrio salexigens)).